A 340-amino-acid polypeptide reads, in one-letter code: Biotin synthase (340 aa).

A Radical SAM core domain is found at 45–272; sequence NAVQVSTLLS…ASYVRLSAGR (228 aa). [4Fe-4S] cluster is bound by residues C60, C64, and C67. Residues C104, C135, C195, and R267 each contribute to the [2Fe-2S] cluster site.

It belongs to the radical SAM superfamily. Biotin synthase family. Homodimer. [4Fe-4S] cluster is required as a cofactor. The cofactor is [2Fe-2S] cluster.

It carries out the reaction (4R,5S)-dethiobiotin + (sulfur carrier)-SH + 2 reduced [2Fe-2S]-[ferredoxin] + 2 S-adenosyl-L-methionine = (sulfur carrier)-H + biotin + 2 5'-deoxyadenosine + 2 L-methionine + 2 oxidized [2Fe-2S]-[ferredoxin]. Its pathway is cofactor biosynthesis; biotin biosynthesis; biotin from 7,8-diaminononanoate: step 2/2. Catalyzes the conversion of dethiobiotin (DTB) to biotin by the insertion of a sulfur atom into dethiobiotin via a radical-based mechanism. This Thioalkalivibrio sulfidiphilus (strain HL-EbGR7) protein is Biotin synthase.